Here is a 213-residue protein sequence, read N- to C-terminus: Orotate phosphoribosyltransferase (213 aa).

K26 contacts 5-phospho-alpha-D-ribose 1-diphosphate. Orotate is bound at residue 34-35; sequence FF. 5-phospho-alpha-D-ribose 1-diphosphate is bound by residues 72 to 73, R99, K100, K103, H105, and 124 to 132; these read YK and DDVITAGTA. Orotate contacts are provided by T128 and R156.

It belongs to the purine/pyrimidine phosphoribosyltransferase family. PyrE subfamily. Homodimer. Requires Mg(2+) as cofactor.

The catalysed reaction is orotidine 5'-phosphate + diphosphate = orotate + 5-phospho-alpha-D-ribose 1-diphosphate. It participates in pyrimidine metabolism; UMP biosynthesis via de novo pathway; UMP from orotate: step 1/2. Catalyzes the transfer of a ribosyl phosphate group from 5-phosphoribose 1-diphosphate to orotate, leading to the formation of orotidine monophosphate (OMP). This Klebsiella pneumoniae (strain 342) protein is Orotate phosphoribosyltransferase.